Consider the following 570-residue polypeptide: Transmembrane 7 superfamily member 3 (570 aa).

The N-terminal stretch at 1 to 21 is a signal peptide; the sequence is MGFLQLLVVAVLASEHRVAGA. N-linked (GlcNAc...) asparagine glycans are attached at residues Asn27, Asn61, Asn75, Asn87, and Asn264. Helical transmembrane passes span 296 to 313, 320 to 342, 347 to 369, 371 to 393, 408 to 430, 437 to 459, and 479 to 501; these read VFFTLFALLGFFICFFGH, LFFIGFIIMGFFFYILITRLTPI, NLILTAVTGSVGGMFLVAVWWRF, ILSICMLCVGLVLGFLISSVTFF, FWVTFSCIAILIPVVFMGCLRIL, VIGSYSVVLAIDSYWSTSLSYIT, and PFQTNDFIILAVWGMLAVSGITL.

As to expression, widely expressed. Highly expressed in kidney and pancreas.

The protein resides in the cell membrane. Involved in the inhibition of cytokine-induced death of pancreatic beta cells. Involved in the promotion of insulin secretion from pancreatic beta cells. Is a downstream transcriptional target of p53/TP53, and acts as a pro-survival homeostatic factor that attenuates the development of cellular stress. Maintains protein homeostasis and promotes cell survival through attenuation of endoplasmic reticulum (ER) stress and the subsequent induction of unfolded protein response (UPR). This Homo sapiens (Human) protein is Transmembrane 7 superfamily member 3 (TM7SF3).